The chain runs to 558 residues: NAD(P)H-quinone oxidoreductase chain 4 (558 aa).

The next 15 helical transmembrane spans lie at 25-45, 56-76, 90-110, 111-131, 133-153, 157-177, 189-209, 230-250, 264-284, 298-318, 327-347, 353-373, 397-417, 438-458, and 485-505; these read FPWL…VPFV, WFAL…YLTG, VSWL…LSMP, LILL…PVTF, PKLF…VFAV, LLFF…LAIW, FILY…AMGF, GFEL…LPIV, TAPV…YALM, FAPL…LTSF, IAYS…SFSE, AMLQ…LVGA, FALW…SGFV, IVID…LLSM, and VYII…PKLM.

This sequence belongs to the complex I subunit 4 family.

The protein localises to the cellular thylakoid membrane. The catalysed reaction is a plastoquinone + NADH + (n+1) H(+)(in) = a plastoquinol + NAD(+) + n H(+)(out). It catalyses the reaction a plastoquinone + NADPH + (n+1) H(+)(in) = a plastoquinol + NADP(+) + n H(+)(out). In terms of biological role, NDH-1 shuttles electrons from NAD(P)H, via FMN and iron-sulfur (Fe-S) centers, to quinones in the respiratory chain. The immediate electron acceptor for the enzyme in this species is believed to be plastoquinone. Couples the redox reaction to proton translocation (for every two electrons transferred, four hydrogen ions are translocated across the cytoplasmic membrane), and thus conserves the redox energy in a proton gradient. The chain is NAD(P)H-quinone oxidoreductase chain 4 from Synechococcus sp. (strain CC9311).